Here is a 327-residue protein sequence, read N- to C-terminus: Peroxidase N (327 aa).

Positions 1 to 28 are cleaved as a signal peptide; the sequence is MKTQTKVMGGHVLLTVFTLCMLCSAVRA. A Pyrrolidone carboxylic acid modification is found at Q29. Cystine bridges form between C39–C116, C72–C77, C122–C323, and C200–C232. H70 (proton acceptor) is an active-site residue. D71, V74, G76, D78, and S80 together coordinate Ca(2+). N155 carries an N-linked (GlcNAc...) asparagine glycan. P163 lines the substrate pocket. A glycan (N-linked (GlcNAc...) asparagine) is linked at N182. A heme b-binding site is contributed by H193. Position 194 (T194) interacts with Ca(2+). N-linked (GlcNAc...) asparagine glycosylation is found at N209 and N239. D245 provides a ligand contact to Ca(2+). A glycan (N-linked (GlcNAc...) asparagine) is linked at N247. Ca(2+) is bound by residues S248 and D253. N-linked (GlcNAc...) asparagine glycosylation is present at N281.

It belongs to the peroxidase family. Classical plant (class III) peroxidase subfamily. Ca(2+) is required as a cofactor. Requires heme b as cofactor.

The protein resides in the secreted. The catalysed reaction is 2 a phenolic donor + H2O2 = 2 a phenolic radical donor + 2 H2O. Its function is as follows. Removal of H(2)O(2), oxidation of toxic reductants, biosynthesis and degradation of lignin, suberization, auxin catabolism, response to environmental stresses such as wounding, pathogen attack and oxidative stress. These functions might be dependent on each isozyme/isoform in each plant tissue. The chain is Peroxidase N (HRPN) from Armoracia rusticana (Horseradish).